The following is a 232-amino-acid chain: Protein G1-like3 (232 aa).

2 disordered regions span residues 20–77 (AGLL…YEAQ) and 189–232 (ARAR…GAAC). A compositionally biased stretch (gly residues) spans 38-53 (AGGGGGGGGDGAGGSS). The ALOG domain maps to 73–200 (RYEAQKRRDW…ARGVSYEKKK (128 aa)). The Nuclear localization signal motif lies at 198–202 (KKKRK). The span at 216 to 232 (PHPPPPPPPPPSAGAAC) shows a compositional bias: pro residues.

This sequence belongs to the plant homeotic and developmental regulators ALOG protein family.

Its subcellular location is the nucleus. In terms of biological role, probable transcription regulator that acts as a developmental regulator by promoting cell growth in response to light. This chain is Protein G1-like3, found in Oryza sativa subsp. indica (Rice).